The sequence spans 247 residues: C-X-C motif chemokine 16 (247 aa).

The signal sequence occupies residues 1 to 26 (MRRGFGPLALTLFLFFFALLTLPGDG). Residues 27–198 (NQGSVAGSCY…EPGAGAGTQA (172 aa)) lie on the Extracellular side of the membrane. Cystine bridges form between C35/C65 and C37/C79. Positions 120 to 152 (IPEATEGKPPDTSTAVQFQSTQQSTFPSGAPSL) are disordered. Over residues 131-147 (TSTAVQFQSTQQSTFPS) the composition is skewed to low complexity. The chain crosses the membrane as a helical span at residues 199–219 (LVPVLSLLAIVFFLVAAMVCV). Residues 220-247 (LCNRRVTRQSSSGLQLCYTPVEPRPQGL) are Cytoplasmic-facing.

Belongs to the intercrine alpha (chemokine CxC) family. Post-translationally, glycosylated.

Its subcellular location is the membrane. Its function is as follows. Induces a strong chemotactic response. Induces calcium mobilization. Binds to CXCR6/Bonzo. Also acts as a scavenger receptor on macrophages, which specifically binds to OxLDL (oxidized low density lipoprotein), suggesting that it may be involved in pathophysiology such as atherogenesis. In Rattus norvegicus (Rat), this protein is C-X-C motif chemokine 16 (Cxcl16).